The following is a 427-amino-acid chain: Serine hydroxymethyltransferase (427 aa).

(6S)-5,6,7,8-tetrahydrofolate-binding positions include L122 and G126–L128. Residue K231 is modified to N6-(pyridoxal phosphate)lysine. (6S)-5,6,7,8-tetrahydrofolate-binding positions include E247 and S355–F357.

This sequence belongs to the SHMT family. In terms of assembly, homodimer. It depends on pyridoxal 5'-phosphate as a cofactor.

It is found in the cytoplasm. It carries out the reaction (6R)-5,10-methylene-5,6,7,8-tetrahydrofolate + glycine + H2O = (6S)-5,6,7,8-tetrahydrofolate + L-serine. Its pathway is one-carbon metabolism; tetrahydrofolate interconversion. The protein operates within amino-acid biosynthesis; glycine biosynthesis; glycine from L-serine: step 1/1. Catalyzes the reversible interconversion of serine and glycine with tetrahydrofolate (THF) serving as the one-carbon carrier. This reaction serves as the major source of one-carbon groups required for the biosynthesis of purines, thymidylate, methionine, and other important biomolecules. Also exhibits THF-independent aldolase activity toward beta-hydroxyamino acids, producing glycine and aldehydes, via a retro-aldol mechanism. In Crocosphaera subtropica (strain ATCC 51142 / BH68) (Cyanothece sp. (strain ATCC 51142)), this protein is Serine hydroxymethyltransferase.